Reading from the N-terminus, the 96-residue chain is Protein RnfH (96 aa).

It belongs to the UPF0125 (RnfH) family.

The sequence is that of Protein RnfH from Citrobacter koseri (strain ATCC BAA-895 / CDC 4225-83 / SGSC4696).